The primary structure comprises 597 residues: MTAAPVSPREIRERLLQAIDKQSNIQNMVAVLEVISSLEKYPITKEALEETRLGKLINDVRKKTSNEDLAKRAKKLLRNWQKLIEPVTQNEQLVRGIPNLPGSANGGGSHNCKADPAPTNLLAGKPIQELKGRNDIQKAHSPKADKTPKRKRKEHRDGGQGTPGHLSKPNHELFQNSSPPPTNGIGGSPPDNLPSPLDGGLQSNNRLEPAENDKHGKIPINAVRPHTNSPGLVKHPSTSSLLKVVVLQQHSGGLDDALSHQPRSPRCSSFSPRGTRAELATRQHTTYAPKGSAPSPSQRLPGVDSAHQSPLHPSTPPATAKRLESPRQDRVSSPHKPVEQLPSTDCHQVLPRTSQQHIPRSSLVDSQTPRTGFSPESSKLDSDDAASGSDNLKRKKSRLRIECEGQSADGTGKPARVKKERRLTFDVITGQIKPLTLKDPAQVESSAPTEQHRTETDKQDLTLSLPSPFQLTNWKELSGNEIIQSYLHRQSSLLSSSGIQTQSAHYYMSEYLKQEECTKRESRKTHVLVPIVLPSDLPGRTREITSSDTDRIQNQHWPGVNGCHDTQGNWYDWTQCISLDPHGDDGRLNILPYVCLD.

Residues 10 to 87 form the TFIIS N-terminal domain; sequence EIRERLLQAI…RNWQKLIEPV (78 aa). 3 disordered regions span residues 96–236, 254–418, and 436–459; these read GIPN…VKHP, LDDA…ARVK, and TLKD…TDKQ. The span at 128–147 shows a compositional bias: basic and acidic residues; that stretch reads QELKGRNDIQKAHSPKADKT. The span at 226 to 236 shows a compositional bias: polar residues; sequence HTNSPGLVKHP. Low complexity predominate over residues 262 to 273; it reads PRSPRCSSFSPR. Basic and acidic residues predominate over residues 321 to 338; it reads KRLESPRQDRVSSPHKPV. Residues 341 to 377 show a composition bias toward polar residues; that stretch reads LPSTDCHQVLPRTSQQHIPRSSLVDSQTPRTGFSPES. Residues 450-459 are compositionally biased toward basic and acidic residues; the sequence is EQHRTETDKQ.

Belongs to the Mediator complex subunit 26 family. In terms of assembly, component of the Mediator complex.

The protein localises to the nucleus. Its function is as follows. Component of the Mediator complex, a coactivator involved in the regulated transcription of nearly all RNA polymerase II-dependent genes. Mediator functions as a bridge to convey information from gene-specific regulatory proteins to the basal RNA polymerase II transcription machinery. Mediator is recruited to promoters by direct interactions with regulatory proteins and serves as a scaffold for the assembly of a functional preinitiation complex with RNA polymerase II and the general transcription factors. The chain is Mediator of RNA polymerase II transcription subunit 26 (med26) from Xenopus laevis (African clawed frog).